We begin with the raw amino-acid sequence, 428 residues long: MTIVEDAKKGIITEEMKIVAKDEGLDPEFIRRGIAAGRIVIPTSPYRQVKICGLGEGLRTKVNASIGVSSDIVDVNMEVQKAIAAEKAGADTLMELGTGGDFLGIRKKVIDSISLSVGSVPLYQAFIEAARKYGSIVHMTEDELFNATEAQAKLGTNFMAIHTGINNITLDRLKAHGRYGGLCSRGGAFMSSWMLHNEKENPLYANFDYLVEILKEHEVVLSTGNGMRAGAVHDATDRAQIQELIINSEVAEKAHQQGLQVIVEGPGHVPLDQIATNVKLMKEMSGHKPFYMLGPLVTDIAPGYDHIVTAIGASVSASYGCDFLCYVTPAEHLALPNLEDVITGVKTSRIAAHVGDMIKYPERARQWDLDMGRARRELDWEKMYSLAIDPEHARAVRNSRAPEDTDACTMCGNFCALKIVNQNYNLAK.

Residues Met-94, Tyr-123, His-162, 184–186 (SRG), 225–228 (NGMR), and Glu-264 each bind substrate. His-268 provides a ligand contact to Zn(2+). Tyr-291 is a substrate binding site. His-332 serves as a coordination point for Zn(2+). 3 residues coordinate [4Fe-4S] cluster: Cys-408, Cys-411, and Cys-415.

The protein belongs to the ThiC family. [4Fe-4S] cluster is required as a cofactor.

The enzyme catalyses 5-amino-1-(5-phospho-beta-D-ribosyl)imidazole + S-adenosyl-L-methionine = 4-amino-2-methyl-5-(phosphooxymethyl)pyrimidine + CO + 5'-deoxyadenosine + formate + L-methionine + 3 H(+). The protein operates within cofactor biosynthesis; thiamine diphosphate biosynthesis. Catalyzes the synthesis of the hydroxymethylpyrimidine phosphate (HMP-P) moiety of thiamine from aminoimidazole ribotide (AIR) in a radical S-adenosyl-L-methionine (SAM)-dependent reaction. The chain is Phosphomethylpyrimidine synthase 2 from Methanosarcina acetivorans (strain ATCC 35395 / DSM 2834 / JCM 12185 / C2A).